A 274-amino-acid chain; its full sequence is 3-methyl-2-oxobutanoate hydroxymethyltransferase (274 aa).

The Mg(2+) site is built by aspartate 44 and aspartate 83. Residues 44–45 (DS), aspartate 83, and lysine 113 each bind 3-methyl-2-oxobutanoate. Glutamate 115 is a binding site for Mg(2+). The active-site Proton acceptor is the glutamate 182.

Belongs to the PanB family. Homodecamer; pentamer of dimers. The cofactor is Mg(2+).

The protein localises to the cytoplasm. The enzyme catalyses 3-methyl-2-oxobutanoate + (6R)-5,10-methylene-5,6,7,8-tetrahydrofolate + H2O = 2-dehydropantoate + (6S)-5,6,7,8-tetrahydrofolate. The protein operates within cofactor biosynthesis; (R)-pantothenate biosynthesis; (R)-pantoate from 3-methyl-2-oxobutanoate: step 1/2. Catalyzes the reversible reaction in which hydroxymethyl group from 5,10-methylenetetrahydrofolate is transferred onto alpha-ketoisovalerate to form ketopantoate. The protein is 3-methyl-2-oxobutanoate hydroxymethyltransferase of Campylobacter jejuni subsp. jejuni serotype O:23/36 (strain 81-176).